Here is a 380-residue protein sequence, read N- to C-terminus: 3-isopropylmalate dehydratase large subunit (380 aa).

The [4Fe-4S] cluster site is built by Cys-262, Cys-320, and Cys-323.

This sequence belongs to the aconitase/IPM isomerase family. LeuC type 2 subfamily. Heterodimer of LeuC and LeuD. [4Fe-4S] cluster serves as cofactor.

The enzyme catalyses (2R,3S)-3-isopropylmalate = (2S)-2-isopropylmalate. Its pathway is amino-acid biosynthesis; L-leucine biosynthesis; L-leucine from 3-methyl-2-oxobutanoate: step 2/4. In terms of biological role, catalyzes the isomerization between 2-isopropylmalate and 3-isopropylmalate, via the formation of 2-isopropylmaleate. The protein is 3-isopropylmalate dehydratase large subunit of Thermococcus kodakarensis (strain ATCC BAA-918 / JCM 12380 / KOD1) (Pyrococcus kodakaraensis (strain KOD1)).